A 295-amino-acid polypeptide reads, in one-letter code: Bifunctional protein FolD (295 aa).

Residues 165–167 (GRG), serine 192, and isoleucine 233 each bind NADP(+).

Belongs to the tetrahydrofolate dehydrogenase/cyclohydrolase family. In terms of assembly, homodimer.

The enzyme catalyses (6R)-5,10-methylene-5,6,7,8-tetrahydrofolate + NADP(+) = (6R)-5,10-methenyltetrahydrofolate + NADPH. It catalyses the reaction (6R)-5,10-methenyltetrahydrofolate + H2O = (6R)-10-formyltetrahydrofolate + H(+). It functions in the pathway one-carbon metabolism; tetrahydrofolate interconversion. Its function is as follows. Catalyzes the oxidation of 5,10-methylenetetrahydrofolate to 5,10-methenyltetrahydrofolate and then the hydrolysis of 5,10-methenyltetrahydrofolate to 10-formyltetrahydrofolate. This chain is Bifunctional protein FolD, found in Tropheryma whipplei (strain Twist) (Whipple's bacillus).